The following is a 619-amino-acid chain: P-granule-associated protein deps-1 (619 aa).

Residues Asn-62 to Leu-101 are required for prg-1 binding. 2 stretches are compositionally biased toward low complexity: residues Ser-563 to Ser-592 and Gly-600 to Val-619. Residues Ser-563–Val-619 are disordered.

In terms of assembly, interacts (via N-terminus) with prg-1; the interaction is direct. May interact with edg-1. Expressed in germ cells.

Its subcellular location is the cytoplasmic granule. The protein resides in the cytoplasm. It is found in the perinuclear region. In terms of biological role, component of P-granules which is required for P-granule formation and integrity in adult germ cells. Promotes the accumulation of glh-1 mRNA and localization of pgl-1 to P-granules. Involved in RNA-mediated gene silencing (RNAi) in the germline. In particular, it is required for piwi-interacting RNA (piRNA) gene silencing and positively regulates the formation of secondary 22G-RNAs, which are RNA-dependent RNA polymerase-derived endo-siRNAs, typically 22 nucleotides in length with a 5'guanosine residue. Its role in RNAi may also be through positively regulating the expression of the dsRNA-binding protein rde-4. Plays a role in small RNA-directed transgenerational epigenetic inheritance. This is P-granule-associated protein deps-1 from Caenorhabditis elegans.